A 101-amino-acid polypeptide reads, in one-letter code: MAKKSKIARNEQRKVIVERYAAKRLELKKTLVDPNATDEAREAARLGLQKLPRNASPIRLRNRDQIDGRPRGTLQKFGISRVRFRDMAHRGELPGITKSSW.

It belongs to the universal ribosomal protein uS14 family. In terms of assembly, part of the 30S ribosomal subunit. Contacts proteins S3 and S10.

Functionally, binds 16S rRNA, required for the assembly of 30S particles and may also be responsible for determining the conformation of the 16S rRNA at the A site. The chain is Small ribosomal subunit protein uS14 from Paenarthrobacter aurescens (strain TC1).